The primary structure comprises 522 residues: Phosphatidylinositol 3,4,5-trisphosphate 3-phosphatase TPTE2 (522 aa).

Polar residues predominate over residues 1–11; it reads MNESPQTNEFK. The tract at residues 1–28 is disordered; sequence MNESPQTNEFKGTTEEAPAKESPHTSEF. Residues 12–27 are compositionally biased toward basic and acidic residues; sequence GTTEEAPAKESPHTSE. Transmembrane regions (helical) follow at residues 66-86, 111-131, and 146-166; these read IVHS…LVLL, ISLA…FVEG, and AIIV…IKLL. In terms of domain architecture, Phosphatase tensin-type spans 210–386; sequence RRYTRDGFDL…GYFAQVKHLY (177 aa). Cysteine 320 (phosphocysteine intermediate) is an active-site residue. Residues 393–522 form the C2 tensin-type domain; the sequence is RRILFIKRFI…FAVEILFGEK (130 aa).

In terms of tissue distribution, isoform 3 is expressed in testis, brain and stomach while isoform 4 seems to be testis-specific.

Its subcellular location is the endoplasmic reticulum membrane. It localises to the golgi apparatus membrane. The protein resides in the cytoplasm. The enzyme catalyses a 1,2-diacyl-sn-glycero-3-phospho-(1D-myo-inositol-3,4,5-trisphosphate) + H2O = a 1,2-diacyl-sn-glycero-3-phospho-(1D-myo-inositol-4,5-bisphosphate) + phosphate. Acts as a lipid phosphatase, removing the phosphate in the D3 position of the inositol ring from phosphatidylinositol 3,4,5-trisphosphate. Functionally, shows no phosphoinositide phosphatase activity. The chain is Phosphatidylinositol 3,4,5-trisphosphate 3-phosphatase TPTE2 (TPTE2) from Homo sapiens (Human).